We begin with the raw amino-acid sequence, 319 residues long: ATP-dependent 6-phosphofructokinase 1 (319 aa).

ATP is bound at residue Gly-11. An ADP-binding site is contributed by 21-25 (RAVTR). Residues 72–73 (RC) and 102–105 (GDGS) each bind ATP. Asp-103 lines the Mg(2+) pocket. Residue 125 to 127 (TID) coordinates substrate. Asp-127 functions as the Proton acceptor in the catalytic mechanism. ADP is bound at residue Arg-154. Substrate-binding positions include Arg-162 and 169 to 171 (MGR). Residues 185-187 (GAE) and 213-215 (KTH) contribute to the ADP site. Substrate contacts are provided by residues Glu-222, Arg-243, and 249-252 (HIQR).

Belongs to the phosphofructokinase type A (PFKA) family. ATP-dependent PFK group I subfamily. Prokaryotic clade 'B1' sub-subfamily. As to quaternary structure, homotetramer. The cofactor is Mg(2+).

The protein localises to the cytoplasm. The catalysed reaction is beta-D-fructose 6-phosphate + ATP = beta-D-fructose 1,6-bisphosphate + ADP + H(+). The protein operates within carbohydrate degradation; glycolysis; D-glyceraldehyde 3-phosphate and glycerone phosphate from D-glucose: step 3/4. With respect to regulation, allosterically activated by ADP and other diphosphonucleosides, and allosterically inhibited by phosphoenolpyruvate. Catalyzes the phosphorylation of D-fructose 6-phosphate to fructose 1,6-bisphosphate by ATP, the first committing step of glycolysis. The polypeptide is ATP-dependent 6-phosphofructokinase 1 (Clostridium perfringens (strain 13 / Type A)).